The primary structure comprises 191 residues: Abscisic acid receptor PYR1 (191 aa).

Positions 23-176 (YQLDPGSCSS…NLQKLATVAE (154 aa)) are START-like. Lys59 contacts abscisate. Thr78 bears the Phosphothreonine; by CARK1 mark. Residues 85–89 (SGLPA) carry the Gate loop motif. Abscisate-binding positions include 89–94 (ANTSTE), 116–122 (RLTNYKS), and Glu141. A Latch loop motif is present at residues 115–117 (HRL).

The protein belongs to the PYR/PYL/RCAR abscisic acid intracellular receptor family. Homodimer. Binds ABA on one subunit only. Interacts with HAB1, AHG3, ABI1 and ABI2 when complexed to ABA, and possibly with other PP2Cs. Binds to CARs protein in an ABA-independent manner, both at the plasma membrane and in the nucleus. Interacts directly with CAR1 and CAR4. Interacts with CARK1 in the cytosol. Interacts with AIP1 in an abscisic acid-dependent manner. Interacts with FREE1 (via N-terminus). Interacts with the E3 ubiquitin-protein ligase RSL1 at the plasma membrane. In terms of processing, ubiquitynated and degraded by the proteasome upon binding to the E3 ubiquitin-protein ligase RSL1 at the plasma membrane. Phosphorylated by CARK1 especially in response to abscisic acid (ABA); this phosphorylation promotes its stability and inhibitory ability to ABI1.

It localises to the cytoplasm. It is found in the cytosol. The protein resides in the nucleus. The protein localises to the cell membrane. Its subcellular location is the vacuole. Its function is as follows. Receptor for abscisic acid (ABA) required for ABA-mediated responses such as stomatal closure and germination inhibition. Inhibits the activity of group-A protein phosphatases type 2C (PP2Cs) when activated by ABA. Can be activated by both (-)-ABA and (+)-ABA. Promotes drought tolerance. This chain is Abscisic acid receptor PYR1, found in Arabidopsis thaliana (Mouse-ear cress).